The chain runs to 161 residues: uncharacterized protein (161 aa).

2 disordered regions span residues 47-83 (KPAKRNIHGHNNHTRSSNHPHSGAHSNINHNNNNNIN) and 104-137 (RRLQQNGGGGDSSSSRSSNNNNSTNDNKPQSKNY). Positions 50 to 64 (KRNIHGHNNHTRSSN) are enriched in basic residues. Low complexity-rich tracts occupy residues 73-83 (NINHNNNNNIN) and 115-130 (SSSSRSSNNNNSTNDN).

This is an uncharacterized protein from Dictyostelium discoideum (Social amoeba).